The chain runs to 632 residues: tRNA uridine 5-carboxymethylaminomethyl modification enzyme MnmG (632 aa).

Residues 15 to 20, Ile-127, and Ser-182 contribute to the FAD site; that span reads GAGHAG. 276–290 is an NAD(+) binding site; the sequence is GPRYCPSIEDKIVRF. Gln-373 is a binding site for FAD.

The protein belongs to the MnmG family. As to quaternary structure, homodimer. Heterotetramer of two MnmE and two MnmG subunits. Requires FAD as cofactor.

Its subcellular location is the cytoplasm. Its function is as follows. NAD-binding protein involved in the addition of a carboxymethylaminomethyl (cmnm) group at the wobble position (U34) of certain tRNAs, forming tRNA-cmnm(5)s(2)U34. This is tRNA uridine 5-carboxymethylaminomethyl modification enzyme MnmG from Streptococcus pyogenes serotype M3 (strain SSI-1).